Reading from the N-terminus, the 94-residue chain is Preprofallaxidin-9 (94 aa).

The signal sequence occupies residues 1–22 (MASLKKSLFLVLFLGLVSLSIC). A propeptide spanning residues 23-46 (EEEKRENEEDAEDENHEEESEEKR) is cleaved from the precursor. A disordered region spans residues 27 to 46 (RENEEDAEDENHEEESEEKR). The segment covering 30 to 42 (EEDAEDENHEEES) has biased composition (acidic residues). The residue at position 62 (Leu62) is a Leucine amide. A propeptide spanning residues 66–70 (SEEKR) is cleaved from the precursor. At Met75 the chain carries Methionine amide. A propeptide spanning residues 79–83 (SEEKR) is cleaved from the precursor. At Met88 the chain carries Methionine amide. Positions 92–94 (SEE) are excised as a propeptide.

The protein belongs to the frog skin active peptide (FSAP) family. Brevinin subfamily. In terms of tissue distribution, expressed by the skin glands.

It is found in the secreted. In terms of biological role, fallaxidin-1.3 shows no antibacterial activity against Gram-positive or Gram-negative bacteria. Does not inhibit the formation of NO by neuronal nitric oxide synthase. Has no effect on splenocyte proliferation or smooth muscle contraction. Its function is as follows. Fallaxidin-3.2 shows antibacterial activity against the Gram-positive bacteria E.faecalis (MIC=100 uM) and L.lactis (MIC=500 uM). No antibacterial activity against the Gram-positive bacteria B.cereus, L.innocua, M.luteus, S.epidermidis, S.uberis and S.aureus, or the Gram-negative bacteria E.cloacae and E.coli. The polypeptide is Preprofallaxidin-9 (Litoria fallax (Eastern dwarf tree frog)).